We begin with the raw amino-acid sequence, 360 residues long: Peptide chain release factor 1 (360 aa).

N5-methylglutamine is present on Gln237.

Belongs to the prokaryotic/mitochondrial release factor family. Methylated by PrmC. Methylation increases the termination efficiency of RF1.

The protein localises to the cytoplasm. Functionally, peptide chain release factor 1 directs the termination of translation in response to the peptide chain termination codons UAG and UAA. The polypeptide is Peptide chain release factor 1 (prfA) (Pseudomonas aeruginosa (strain ATCC 15692 / DSM 22644 / CIP 104116 / JCM 14847 / LMG 12228 / 1C / PRS 101 / PAO1)).